A 131-amino-acid chain; its full sequence is Fumarate reductase subunit C (131 aa).

Helical transmembrane passes span Glu-30–Leu-50, Ile-61–Leu-81, and Ile-110–Phe-130.

It belongs to the FrdC family. As to quaternary structure, part of an enzyme complex containing four subunits: a flavoprotein (FrdA), an iron-sulfur protein (FrdB), and two hydrophobic anchor proteins (FrdC and FrdD).

The protein localises to the cell inner membrane. Its function is as follows. Two distinct, membrane-bound, FAD-containing enzymes are responsible for the catalysis of fumarate and succinate interconversion; fumarate reductase is used in anaerobic growth, and succinate dehydrogenase is used in aerobic growth. Anchors the catalytic components of the fumarate reductase complex to the cell inner membrane, binds quinones. This chain is Fumarate reductase subunit C, found in Klebsiella pneumoniae subsp. pneumoniae (strain ATCC 700721 / MGH 78578).